The sequence spans 82 residues: Small ribosomal subunit protein bS16 (82 aa).

It belongs to the bacterial ribosomal protein bS16 family.

This chain is Small ribosomal subunit protein bS16, found in Deinococcus geothermalis (strain DSM 11300 / CIP 105573 / AG-3a).